A 540-amino-acid chain; its full sequence is Cytochrome P450 monooxygenase CYP3 (540 aa).

A glycan (N-linked (GlcNAc...) asparagine) is linked at N2. Residues 26–46 (IFGLSSSTLVVLVAMIAVSTL) form a helical membrane-spanning segment. N100, N210, and N400 each carry an N-linked (GlcNAc...) asparagine glycan. Residue C471 participates in heme binding.

It belongs to the cytochrome P450 family. Heme is required as a cofactor.

It is found in the membrane. It participates in secondary metabolite biosynthesis. Its function is as follows. Cytochrome P450 monooxygenase; part of the gene cluster that mediates the biosynthesis of itaconic acid and 2-hydroxyparaconate. Cis-aconitate is secreted by the mitochondrial tricarboxylate transporter MTT1. In the cytosol cis-aconitate is converted into trans-aconitate via isomerization by the aconitate-delta-isomerase ADI1. Decarboxylation of trans-aconitate by the trans-aconitate decarboxylase TAD1 then leads then to the production of itaconic acid. The cytochrome P450 monooxygenase CYP3 further converts itaconate to 2-hydroxyparaconate via oxidation of the double bond, leading to a transient epoxide, which can subsequently be lactonized to produce 2-hydroxyparaconate. Secretion of itaconate and possibly 2-hydroxyparaconate into the medium is mediated by the major facilitator ITP1. The glyoxalase domain-containing protein RDO1 is not involved in the biosynthesis of itaconate and 2-hydroxyparaconate, however, it might play a role in the further conversion of 2-hydroxyparaconate to itatartarate. The sequence is that of Cytochrome P450 monooxygenase CYP3 from Mycosarcoma maydis (Corn smut fungus).